The chain runs to 116 residues: MTFEMLYSKIHRATITDANLNYIGSITIDEDLAKLAKLREGMKVEIVDVNNGERFSTYVILGKKRGEICVNGAAARKVAIGDVVIILAYASMNEDEINAHKPCIVLVDEKNEILEK.

Ser25 functions as the Schiff-base intermediate with substrate; via pyruvic acid in the catalytic mechanism. A Pyruvic acid (Ser) modification is found at Ser25. Residue Thr57 participates in substrate binding. Tyr58 (proton donor) is an active-site residue. 72–74 contributes to the substrate binding site; it reads GAA.

This sequence belongs to the PanD family. As to quaternary structure, heterooctamer of four alpha and four beta subunits. It depends on pyruvate as a cofactor. In terms of processing, is synthesized initially as an inactive proenzyme, which is activated by self-cleavage at a specific serine bond to produce a beta-subunit with a hydroxyl group at its C-terminus and an alpha-subunit with a pyruvoyl group at its N-terminus.

Its subcellular location is the cytoplasm. The catalysed reaction is L-aspartate + H(+) = beta-alanine + CO2. It functions in the pathway cofactor biosynthesis; (R)-pantothenate biosynthesis; beta-alanine from L-aspartate: step 1/1. Functionally, catalyzes the pyruvoyl-dependent decarboxylation of aspartate to produce beta-alanine. In Helicobacter pylori (strain HPAG1), this protein is Aspartate 1-decarboxylase.